A 188-amino-acid chain; its full sequence is UPF0398 protein OEOE_1093 (188 aa).

Belongs to the UPF0398 family.

In Oenococcus oeni (strain ATCC BAA-331 / PSU-1), this protein is UPF0398 protein OEOE_1093.